The sequence spans 296 residues: Putative thiosulfate sulfurtransferase SseA (296 aa).

2 consecutive Rhodanese domains span residues 31–138 and 168–286; these read GKPG…DTSL and ILGT…VPIT. Cys-245 serves as the catalytic Cysteine persulfide intermediate. Arg-250 serves as a coordination point for substrate.

The enzyme catalyses thiosulfate + hydrogen cyanide = thiocyanate + sulfite + 2 H(+). The protein is Putative thiosulfate sulfurtransferase SseA (sseA) of Mycobacterium leprae (strain TN).